Here is a 509-residue protein sequence, read N- to C-terminus: Probable cytochrome P450 4ac3 (509 aa).

C454 is a heme binding site.

This sequence belongs to the cytochrome P450 family. It depends on heme as a cofactor.

The protein localises to the endoplasmic reticulum membrane. Its subcellular location is the microsome membrane. May be involved in the metabolism of insect hormones and in the breakdown of synthetic insecticides. The chain is Probable cytochrome P450 4ac3 (Cyp4ac3) from Drosophila melanogaster (Fruit fly).